We begin with the raw amino-acid sequence, 467 residues long: Transcription factor bHLH3 (467 aa).

Positions 316–365 constitute a bHLH domain; sequence EEALNHVEAERQRREKLNQRFYALRAVVPNISKMDKASLLADAITYITDM.

Homodimer.

The protein resides in the nucleus. The chain is Transcription factor bHLH3 (BHLH3) from Arabidopsis thaliana (Mouse-ear cress).